The primary structure comprises 170 residues: Cyclic pyranopterin monophosphate synthase (170 aa).

Substrate is bound by residues 89-91 (LCH) and 125-126 (ME). Asp140 is a catalytic residue.

It belongs to the MoaC family. In terms of assembly, homohexamer; trimer of dimers.

The catalysed reaction is (8S)-3',8-cyclo-7,8-dihydroguanosine 5'-triphosphate = cyclic pyranopterin phosphate + diphosphate. The protein operates within cofactor biosynthesis; molybdopterin biosynthesis. Catalyzes the conversion of (8S)-3',8-cyclo-7,8-dihydroguanosine 5'-triphosphate to cyclic pyranopterin monophosphate (cPMP). In Streptomyces coelicolor (strain ATCC BAA-471 / A3(2) / M145), this protein is Cyclic pyranopterin monophosphate synthase.